The following is a 328-amino-acid chain: GMP reductase (328 aa).

The active-site Thioimidate intermediate is the cysteine 176. 205–228 contributes to the NADP(+) binding site; that stretch reads IIADGGIRTHGDIAKSIRFGASMI.

This sequence belongs to the IMPDH/GMPR family. GuaC type 2 subfamily.

It catalyses the reaction IMP + NH4(+) + NADP(+) = GMP + NADPH + 2 H(+). In terms of biological role, catalyzes the irreversible NADPH-dependent deamination of GMP to IMP. It functions in the conversion of nucleobase, nucleoside and nucleotide derivatives of G to A nucleotides, and in maintaining the intracellular balance of A and G nucleotides. This chain is GMP reductase, found in Streptococcus pneumoniae serotype 4 (strain ATCC BAA-334 / TIGR4).